A 782-amino-acid polypeptide reads, in one-letter code: Hypersensitive to pore-forming toxin protein 40 (782 aa).

Residues 138 to 203 enclose the Tudor; degenerate domain; that stretch reads ESEIVPGAMY…TLFVSDQFSI (66 aa). Composition is skewed to polar residues over residues 332-346 and 413-443; these read SVNP…SSSM and FEST…STIQ. Disordered regions lie at residues 332–351, 413–448, 472–492, and 617–672; these read SVNP…DCPY, FEST…NEED, IERP…NMSE, and VAQG…LEDP. Polar residues predominate over residues 617–634; sequence VAQGSNAPKTAPNDSVNS. Basic and acidic residues predominate over residues 638-662; that stretch reads DDIHETDKRGNHCKSVTEDPKDNKD.

The protein resides in the cytoplasm. The protein localises to the perinuclear region. This is Hypersensitive to pore-forming toxin protein 40 from Caenorhabditis elegans.